A 149-amino-acid chain; its full sequence is Nucleoside diphosphate kinase (149 aa).

ATP-binding residues include lysine 9, phenylalanine 57, arginine 85, threonine 91, arginine 102, and asparagine 112. Residue histidine 115 is the Pros-phosphohistidine intermediate of the active site.

It belongs to the NDK family. Requires Mg(2+) as cofactor.

It is found in the cytoplasm. The catalysed reaction is a 2'-deoxyribonucleoside 5'-diphosphate + ATP = a 2'-deoxyribonucleoside 5'-triphosphate + ADP. The enzyme catalyses a ribonucleoside 5'-diphosphate + ATP = a ribonucleoside 5'-triphosphate + ADP. In terms of biological role, major role in the synthesis of nucleoside triphosphates other than ATP. The ATP gamma phosphate is transferred to the NDP beta phosphate via a ping-pong mechanism, using a phosphorylated active-site intermediate. This is Nucleoside diphosphate kinase from Methanosarcina acetivorans (strain ATCC 35395 / DSM 2834 / JCM 12185 / C2A).